Consider the following 518-residue polypeptide: Bifunctional purine biosynthesis protein PurH (518 aa).

An MGS-like domain is found at 1–144 (MSKRALISVS…KNHAAVTVVC (144 aa)).

It belongs to the PurH family.

The catalysed reaction is (6R)-10-formyltetrahydrofolate + 5-amino-1-(5-phospho-beta-D-ribosyl)imidazole-4-carboxamide = 5-formamido-1-(5-phospho-D-ribosyl)imidazole-4-carboxamide + (6S)-5,6,7,8-tetrahydrofolate. The enzyme catalyses IMP + H2O = 5-formamido-1-(5-phospho-D-ribosyl)imidazole-4-carboxamide. It functions in the pathway purine metabolism; IMP biosynthesis via de novo pathway; 5-formamido-1-(5-phospho-D-ribosyl)imidazole-4-carboxamide from 5-amino-1-(5-phospho-D-ribosyl)imidazole-4-carboxamide (10-formyl THF route): step 1/1. The protein operates within purine metabolism; IMP biosynthesis via de novo pathway; IMP from 5-formamido-1-(5-phospho-D-ribosyl)imidazole-4-carboxamide: step 1/1. This Lactococcus lactis subsp. cremoris (strain SK11) protein is Bifunctional purine biosynthesis protein PurH.